We begin with the raw amino-acid sequence, 273 residues long: Nucleotide-binding protein TTHA0319 (273 aa).

Residue 8 to 15 participates in ATP binding; that stretch reads GLSGAGKT. Residue 57 to 60 participates in GTP binding; that stretch reads DARA.

Belongs to the RapZ-like family.

Its function is as follows. Displays ATPase and GTPase activities. This Thermus thermophilus (strain ATCC 27634 / DSM 579 / HB8) protein is Nucleotide-binding protein TTHA0319.